The sequence spans 251 residues: Imidazole glycerol phosphate synthase subunit HisF (251 aa).

Catalysis depends on residues Asp12 and Asp131.

The protein belongs to the HisA/HisF family. As to quaternary structure, heterodimer of HisH and HisF.

It localises to the cytoplasm. It catalyses the reaction 5-[(5-phospho-1-deoxy-D-ribulos-1-ylimino)methylamino]-1-(5-phospho-beta-D-ribosyl)imidazole-4-carboxamide + L-glutamine = D-erythro-1-(imidazol-4-yl)glycerol 3-phosphate + 5-amino-1-(5-phospho-beta-D-ribosyl)imidazole-4-carboxamide + L-glutamate + H(+). Its pathway is amino-acid biosynthesis; L-histidine biosynthesis; L-histidine from 5-phospho-alpha-D-ribose 1-diphosphate: step 5/9. Its function is as follows. IGPS catalyzes the conversion of PRFAR and glutamine to IGP, AICAR and glutamate. The HisF subunit catalyzes the cyclization activity that produces IGP and AICAR from PRFAR using the ammonia provided by the HisH subunit. The protein is Imidazole glycerol phosphate synthase subunit HisF of Helicobacter hepaticus (strain ATCC 51449 / 3B1).